Reading from the N-terminus, the 338-residue chain is Methionyl-tRNA formyltransferase (338 aa).

Residue 110–113 (SLLP) participates in (6S)-5,6,7,8-tetrahydrofolate binding.

Belongs to the Fmt family.

It catalyses the reaction L-methionyl-tRNA(fMet) + (6R)-10-formyltetrahydrofolate = N-formyl-L-methionyl-tRNA(fMet) + (6S)-5,6,7,8-tetrahydrofolate + H(+). Its function is as follows. Attaches a formyl group to the free amino group of methionyl-tRNA(fMet). The formyl group appears to play a dual role in the initiator identity of N-formylmethionyl-tRNA by promoting its recognition by IF2 and preventing the misappropriation of this tRNA by the elongation apparatus. In Synechococcus sp. (strain CC9902), this protein is Methionyl-tRNA formyltransferase.